The chain runs to 824 residues: Leucine--tRNA ligase (824 aa).

Residues 40–50 carry the 'HIGH' region motif; the sequence is PYPSGKIHMGH. The 'KMSKS' region signature appears at 580 to 584; that stretch reads KMSKS. K583 contributes to the ATP binding site.

This sequence belongs to the class-I aminoacyl-tRNA synthetase family.

Its subcellular location is the cytoplasm. It catalyses the reaction tRNA(Leu) + L-leucine + ATP = L-leucyl-tRNA(Leu) + AMP + diphosphate. The protein is Leucine--tRNA ligase of Alkaliphilus metalliredigens (strain QYMF).